The following is an 88-amino-acid chain: Probable Fe(2+)-trafficking protein (88 aa).

The protein belongs to the Fe(2+)-trafficking protein family.

Its function is as follows. Could be a mediator in iron transactions between iron acquisition and iron-requiring processes, such as synthesis and/or repair of Fe-S clusters in biosynthetic enzymes. The sequence is that of Probable Fe(2+)-trafficking protein from Teredinibacter turnerae (strain ATCC 39867 / T7901).